The sequence spans 80 residues: Late expression factor 10 (80 aa).

This sequence belongs to the baculoviridae LEF-10 family.

Its function is as follows. Involved in late/very late gene activation. This is Late expression factor 10 (LEF-10) from Orgyia pseudotsugata multicapsid polyhedrosis virus (OpMNPV).